A 319-amino-acid chain; its full sequence is Ferrochelatase (319 aa).

Fe cation contacts are provided by H192 and E271.

It belongs to the ferrochelatase family.

It localises to the cytoplasm. It carries out the reaction heme b + 2 H(+) = protoporphyrin IX + Fe(2+). Its pathway is porphyrin-containing compound metabolism; protoheme biosynthesis; protoheme from protoporphyrin-IX: step 1/1. Its function is as follows. Catalyzes the ferrous insertion into protoporphyrin IX. This is Ferrochelatase from Geotalea daltonii (strain DSM 22248 / JCM 15807 / FRC-32) (Geobacter daltonii).